The following is a 527-amino-acid chain: UPF0053 protein YegH (527 aa).

The next 5 helical transmembrane spans lie at 14-34 (ITLIVIELVLGIDNLVFIAIL), 51-71 (LLLAMLMRLLLLASISWLVTL), 81-101 (FTFSARDLIMLFGGFFLLFKA), 145-165 (ITAVGMVDHLLVMMAAVVIAI), and 185-205 (IVILCLSFLLMIGFSLVAEGF). CBS domains are found at residues 306–366 (MTSR…GEPL) and 371–429 (LIRQ…PNEV).

This sequence belongs to the UPF0053 family.

The protein resides in the cell membrane. This is UPF0053 protein YegH (yegH) from Escherichia coli (strain K12).